A 459-amino-acid polypeptide reads, in one-letter code: Probable acetate kinase (459 aa).

Asn9 is a Mg(2+) binding site. Residue Lys16 coordinates ATP. Arg100 is a binding site for substrate. Residue Asp156 is the Proton donor/acceptor of the active site. ATP is bound by residues 216-220 and 299-301; these read HLGSG and DFR. The segment at 308–338 is disordered; the sequence is TTTSSPTPSPNPNPNPNPDPNPDPNPDPQNQ. Pro residues predominate over residues 314 to 334; the sequence is TPSPNPNPNPNPDPNPDPNPD. Glu441 provides a ligand contact to Mg(2+).

The protein belongs to the acetokinase family. The cofactor is Mg(2+).

It carries out the reaction acetate + ATP = acetyl phosphate + ADP. Its pathway is metabolic intermediate biosynthesis; acetyl-CoA biosynthesis; acetyl-CoA from acetate: step 1/2. The chain is Probable acetate kinase from Chaetomium globosum (strain ATCC 6205 / CBS 148.51 / DSM 1962 / NBRC 6347 / NRRL 1970) (Soil fungus).